Here is an 87-residue protein sequence, read N- to C-terminus: CRISPR-associated endoribonuclease Cas2 (87 aa).

Aspartate 8 provides a ligand contact to Mg(2+).

Belongs to the CRISPR-associated endoribonuclease Cas2 protein family. Homodimer, forms a heterotetramer with a Cas1 homodimer. The cofactor is Mg(2+).

CRISPR (clustered regularly interspaced short palindromic repeat), is an adaptive immune system that provides protection against mobile genetic elements (viruses, transposable elements and conjugative plasmids). CRISPR clusters contain sequences complementary to antecedent mobile elements and target invading nucleic acids. CRISPR clusters are transcribed and processed into CRISPR RNA (crRNA). Functions as a ssRNA-specific endoribonuclease. Involved in the integration of spacer DNA into the CRISPR cassette. The chain is CRISPR-associated endoribonuclease Cas2 from Frankia alni (strain DSM 45986 / CECT 9034 / ACN14a).